We begin with the raw amino-acid sequence, 348 residues long: NADH-quinone oxidoreductase subunit H (348 aa).

The next 8 helical transmembrane spans lie at 7–27, 82–102, 115–135, 161–181, 199–219, 251–271, 287–307, and 322–342; these read IWLL…VVLL, GVFL…WAVI, VGLL…IMGG, IGFV…TTIV, FLDW…ISAL, LFFL…TILF, VPGI…FAMV, and LGWK…ATFL.

Belongs to the complex I subunit 1 family. NDH-1 is composed of 14 different subunits. Subunits NuoA, H, J, K, L, M, N constitute the membrane sector of the complex.

Its subcellular location is the cell inner membrane. The enzyme catalyses a quinone + NADH + 5 H(+)(in) = a quinol + NAD(+) + 4 H(+)(out). NDH-1 shuttles electrons from NADH, via FMN and iron-sulfur (Fe-S) centers, to quinones in the respiratory chain. The immediate electron acceptor for the enzyme in this species is believed to be ubiquinone. Couples the redox reaction to proton translocation (for every two electrons transferred, four hydrogen ions are translocated across the cytoplasmic membrane), and thus conserves the redox energy in a proton gradient. This subunit may bind ubiquinone. This Bartonella quintana (strain Toulouse) (Rochalimaea quintana) protein is NADH-quinone oxidoreductase subunit H.